The following is a 114-amino-acid chain: Iron-sulfur cluster insertion protein ErpA (114 aa).

Positions 42, 106, and 108 each coordinate iron-sulfur cluster.

The protein belongs to the HesB/IscA family. In terms of assembly, homodimer. Iron-sulfur cluster is required as a cofactor.

Its function is as follows. Required for insertion of 4Fe-4S clusters for at least IspG. This is Iron-sulfur cluster insertion protein ErpA from Sodalis glossinidius (strain morsitans).